The chain runs to 85 residues: Antifungal protein (85 aa).

The signal sequence occupies residues 1 to 18 (MVKLFVIVILALIAVAFG). 2 consecutive repeat copies span residues 19-25 (QHGHGGQ) and 67-73 (QHGHGGQ). The tract at residues 19–73 (QHGHGGQDQHGYGHGQQAVYGKGHEGHGVNNLGQDGHGQHGYAHGHSDQHGHGGQ) is 2 X 7 AA repeats of Q-H-G-H-G-G-Q. Gly residues predominate over residues 22–32 (HGGQDQHGYGH). The interval 22–85 (HGGQDQHGYG…QHDGYKNRGY (64 aa)) is disordered. Positions 63–85 (GHSDQHGHGGQHGQHDGYKNRGY) are enriched in basic and acidic residues.

As to quaternary structure, homodimer. In terms of processing, the N-terminus is blocked. In terms of tissue distribution, hemolymph.

Its function is as follows. This protein inhibits the growth of a variety of fungal species. The antifungal activity of this protein is enhanced by the presence of sarcotoxin IA. The protein is Antifungal protein of Sarcophaga peregrina (Flesh fly).